We begin with the raw amino-acid sequence, 286 residues long: Flagellar filament 31.3 kDa core protein (286 aa).

This sequence belongs to the bacterial flagellin family. The core of the flagellum consists of several antigenically related polypeptides. In terms of processing, glycosylated. Glycosylation is not essential for motility.

Its subcellular location is the periplasmic flagellum. It localises to the periplasm. In terms of biological role, component of the core of the flagella. This Treponema maltophilum protein is Flagellar filament 31.3 kDa core protein (flaB2).